We begin with the raw amino-acid sequence, 167 residues long: Putative C-type lectin-like domain family 1 (167 aa).

Topologically, residues 1–67 (MVSNFFHVIQ…KYDCPFSGTS (67 aa)) are cytoplasmic. A helical; Signal-anchor for type II membrane protein transmembrane segment spans residues 68-88 (FVVFSLFLICAMAGDVVYADI). The Extracellular portion of the chain corresponds to 89–167 (KTVRTSPLEL…DITAMVRFNI (79 aa)). N-linked (GlcNAc...) asparagine glycosylation is found at Asn109, Asn140, and Asn149. Residues 116 to 167 (SCPAKDWKVHKGKCYWIAETKKSWNKSQNDCAINNSYLMVIQDITAMVRFNI) form the C-type lectin; atypical domain.

Expressed in spleen, lymph node, and tonsil. Lower expression in peripheral blood, bone marrow, and colon. No expression detected in thymus. Highly expressed in dendritic and B-cells.

It is found in the cell membrane. Functionally, may function in mediating immune cell-cell interactions. May act as a T-cell costimulatory molecule, enhancing anti-CD3-induced proliferation. May play a role in the interaction of dendritic cells with T-cells and the cells of the adaptive immune response. The polypeptide is Putative C-type lectin-like domain family 1 (Homo sapiens (Human)).